The primary structure comprises 192 residues: MIYQKQRNTAETQLNISISDDQSPSHINTGVGFLNHMLTLFTFHSGLSLNIEAQGDIDVDDHHVTEDIGIVIGQLLLEMIKDKKHFVRYGTMYISMDETLARVVVDISGRPYLSFNATLSKEKVGTFDTELVEEFFRAVVINARLTTHIDLIRGGNTHHEIEAIFKAFSRALGIALTATDDQRVPSSKGVIE.

The protein belongs to the imidazoleglycerol-phosphate dehydratase family.

It localises to the cytoplasm. It catalyses the reaction D-erythro-1-(imidazol-4-yl)glycerol 3-phosphate = 3-(imidazol-4-yl)-2-oxopropyl phosphate + H2O. Its pathway is amino-acid biosynthesis; L-histidine biosynthesis; L-histidine from 5-phospho-alpha-D-ribose 1-diphosphate: step 6/9. The chain is Imidazoleglycerol-phosphate dehydratase from Staphylococcus aureus (strain MRSA252).